Here is a 360-residue protein sequence, read N- to C-terminus: Abhydrolase domain-containing protein lid-1 (360 aa).

The region spanning 73 to 203 (AIVFIPGLGA…MSFLGGVAGY (131 aa)) is the AB hydrolase-1 domain.

It belongs to the peptidase S33 family. ABHD4/ABHD5 subfamily. As to quaternary structure, interacts with atgl-1.

The protein resides in the lipid droplet. In terms of biological role, acts coordinately with atgl-1 within the lipolytic cascade to distribute stored energy to tissues during nutritional deprivation. This Caenorhabditis elegans protein is Abhydrolase domain-containing protein lid-1.